Here is a 458-residue protein sequence, read N- to C-terminus: ELITERGCSGPASNLNIGHGGLNQLGGAFVNGRPLPEVVRQRIVDLAHQGVRPCDISRQLRVSHGCVSKILGRYYETGSIRPGVIGGSKPKVATPKVVEKIGDYKRQNPTMFAWEIRDRLLAEGVCDNDTVPSVSSINRIIRTKVQQLFNLPMESCVKSLSPGQTLIPSSAVTPPESPHSDSLGSTYSISGLLGITQPGADGKRKLDDSDQESCRLSIDSQGSMGISRKQLRTEAYGHHPLDALECHFQRQHFPESYSSSTHSKTEQALYTLPLLNNAMDDGKSSLTSTNTTIGRNLSTHQGYSALSELSAFTIKQEASDSSSASSTPSSLCSPTFLDLQPISSGCSAPSFSAFSHPASVYGQFTSHMASGRDVVGSTLPGYPPHIPSGQGNYASSAIAGMVAAGGDYSGNAYSHGAYAAYGESWRFPSSSLLGSPYYYSSATRTAPPPTTAGAYDLL.

A DNA-binding region (paired) is located at residues glycine 18–lysine 144. The tract at residues glycine 21 to threonine 77 is PAI subdomain. An RED subdomain region spans residues lysine 96 to lysine 144. Residues proline 198 to serine 217 form a disordered region.

The protein resides in the nucleus. Its function is as follows. Probable transcription factor. Involved in kidney development, acting synergistically with lhx1/lim-1 to establish the pronephric primordium in late gastrulae/early neurulae. This chain is Paired box protein Pax-8, found in Xenopus tropicalis (Western clawed frog).